We begin with the raw amino-acid sequence, 416 residues long: 4-hydroxy-3-methylbut-2-en-1-yl diphosphate synthase (flavodoxin) (416 aa).

[4Fe-4S] cluster is bound by residues C304, C307, C350, and E357.

The protein belongs to the IspG family. Requires [4Fe-4S] cluster as cofactor.

The enzyme catalyses (2E)-4-hydroxy-3-methylbut-2-enyl diphosphate + oxidized [flavodoxin] + H2O + 2 H(+) = 2-C-methyl-D-erythritol 2,4-cyclic diphosphate + reduced [flavodoxin]. The protein operates within isoprenoid biosynthesis; isopentenyl diphosphate biosynthesis via DXP pathway; isopentenyl diphosphate from 1-deoxy-D-xylulose 5-phosphate: step 5/6. Functionally, converts 2C-methyl-D-erythritol 2,4-cyclodiphosphate (ME-2,4cPP) into 1-hydroxy-2-methyl-2-(E)-butenyl 4-diphosphate. The chain is 4-hydroxy-3-methylbut-2-en-1-yl diphosphate synthase (flavodoxin) from Rhizobium johnstonii (strain DSM 114642 / LMG 32736 / 3841) (Rhizobium leguminosarum bv. viciae).